The sequence spans 291 residues: Lactoylglutathione lyase (291 aa).

2 consecutive VOC domains span residues arginine 24–arginine 149 and proline 155–asparagine 283. Residues arginine 31, asparagine 82, and histidine 96 each contribute to the substrate site. The active site involves histidine 96. Glutamate 145 serves as the catalytic Proton donor/acceptor. Glutamate 145 contributes to the Ni(2+) binding site. Active-site residues include glutamine 158 and glutamate 209. Glutamate 209 is a binding site for Ni(2+).

It belongs to the glyoxalase I family. Monomer. The cofactor is Ni(2+). Phosphorylated after gibberellin treatment. In terms of tissue distribution, expressed in callus, stem, leaves, panicles and maturing seeds (at protein level).

The enzyme catalyses (R)-S-lactoylglutathione = methylglyoxal + glutathione. It participates in secondary metabolite metabolism; methylglyoxal degradation; (R)-lactate from methylglyoxal: step 1/2. Catalyzes the conversion of hemimercaptal, formed from methylglyoxal and glutathione, to S-lactoylglutathione. Involved in the detoxifiation of methylglyoxal. Can functionally complement growth defect of a yeast mutant lacking GLY I. Involved in abiotic stress response. Over-expression of GLYI-11 in tobacco increases tolerance to osmotic, oxidative and salt stresses. The polypeptide is Lactoylglutathione lyase (Oryza sativa subsp. japonica (Rice)).